A 234-amino-acid polypeptide reads, in one-letter code: Endonuclease V (234 aa).

Positions 36 and 104 each coordinate Mg(2+).

Belongs to the endonuclease V family. The cofactor is Mg(2+).

The protein localises to the cytoplasm. It carries out the reaction Endonucleolytic cleavage at apurinic or apyrimidinic sites to products with a 5'-phosphate.. DNA repair enzyme involved in the repair of deaminated bases. Selectively cleaves double-stranded DNA at the second phosphodiester bond 3' to a deoxyinosine leaving behind the intact lesion on the nicked DNA. The protein is Endonuclease V of Yersinia enterocolitica serotype O:8 / biotype 1B (strain NCTC 13174 / 8081).